The sequence spans 1037 residues: Cysteine-rich motor neuron 1 protein (1037 aa).

The first 34 residues, 1-34, serve as a signal peptide directing secretion; the sequence is MYLVAGGRGLAGCGHLSVSLLGLLLLLARSGTRA. One can recognise an IGFBP N-terminal domain in the interval 35-112; it reads LVCLPCDESK…EYEVGVCEDE (78 aa). Topologically, residues 35 to 940 are extracellular; the sequence is LVCLPCDESK…HPGEDSSLDS (906 aa). 6 cysteine pairs are disulfide-bonded: Cys37-Cys60, Cys40-Cys62, Cys45-Cys63, Cys51-Cys66, Cys74-Cys90, and Cys84-Cys109. A Cell attachment site motif is present at residues 314–316; the sequence is RGD. Residue Asn330 is glycosylated (N-linked (GlcNAc...) asparagine). 2 VWFC domains span residues 334–391 and 401–457; these read PACV…PVCE and AGCY…PVCE. 4 consecutive Antistasin-like domains span residues 469 to 498, 505 to 532, 539 to 564, and 567 to 592; these read CGEL…TCQC, CLGL…LCQC, CRPT…ICRC, and CPEL…ICKC. 4 VWFC domains span residues 606–663, 677–735, 751–809, and 817–874; these read GTCL…PSCT, SICH…PQCT, SYCR…PYCL, and VVCH…PMCP. Residues 941–961 form a helical membrane-spanning segment; sequence IVSVVVPIIICLSIIIAFLLI. The Cytoplasmic segment spans residues 962–1037; that stretch reads NQKKQWVPLL…LQADNFYQTV (76 aa). The residue at position 1036 (Thr1036) is a Phosphothreonine.

In terms of assembly, interacts with BMP4 and BMP7. In terms of tissue distribution, expressed during embryonic development in brain, kidney, spinal cord, testis, lens, vibrissae, pinna, tooth primordia and in specific regions of the CNS. Expressed in adult lens. Displays male-specific expression in the fetal gonads with the strongest expression in the Sertoli cells of developing testis.

It is found in the membrane. Functionally, may play a role in CNS development by interacting with growth factors implicated in motor neuron differentiation and survival. May play a role in capillary formation and maintenance during angiogenesis. Modulates BMP activity by affecting its processing and delivery to the cell surface. In Mus musculus (Mouse), this protein is Cysteine-rich motor neuron 1 protein (Crim1).